We begin with the raw amino-acid sequence, 71 residues long: Exodeoxyribonuclease 7 small subunit (71 aa).

This sequence belongs to the XseB family. In terms of assembly, heterooligomer composed of large and small subunits.

It is found in the cytoplasm. The catalysed reaction is Exonucleolytic cleavage in either 5'- to 3'- or 3'- to 5'-direction to yield nucleoside 5'-phosphates.. In terms of biological role, bidirectionally degrades single-stranded DNA into large acid-insoluble oligonucleotides, which are then degraded further into small acid-soluble oligonucleotides. This is Exodeoxyribonuclease 7 small subunit from Clostridium botulinum (strain Kyoto / Type A2).